The following is a 427-amino-acid chain: 3-isopropylmalate dehydratase large subunit (427 aa).

[4Fe-4S] cluster-binding residues include Cys-308, Cys-368, and Cys-371.

It belongs to the aconitase/IPM isomerase family. LeuC type 2 subfamily. In terms of assembly, heterodimer of LeuC and LeuD. [4Fe-4S] cluster serves as cofactor.

It carries out the reaction (2R,3S)-3-isopropylmalate = (2S)-2-isopropylmalate. The protein operates within amino-acid biosynthesis; L-leucine biosynthesis; L-leucine from 3-methyl-2-oxobutanoate: step 2/4. Catalyzes the isomerization between 2-isopropylmalate and 3-isopropylmalate, via the formation of 2-isopropylmaleate. This Geotalea uraniireducens (strain Rf4) (Geobacter uraniireducens) protein is 3-isopropylmalate dehydratase large subunit.